The following is a 209-amino-acid chain: Dual-specificity protein phosphatase SDP1 (209 aa).

Residues 1 to 11 are compositionally biased toward polar residues; the sequence is MNIYTSPTRTP. Residues 1-43 are disordered; that stretch reads MNIYTSPTRTPNIAPKSGQRPSLPMLATDERSTDKESPNEDRE. Positions 28–43 are enriched in basic and acidic residues; sequence TDERSTDKESPNEDRE. Cys-47 and Cys-142 form a disulfide bridge. Positions 59–196 constitute a Tyrosine-protein phosphatase domain; sequence GPLLVLPEKI…LMEWEVALNA (138 aa). Position 111 (His-111) interacts with 4-O-phospho-L-tyrosine. The active-site Phosphocysteine intermediate is Cys-140.

The protein belongs to the protein-tyrosine phosphatase family. Non-receptor class dual specificity subfamily.

It carries out the reaction O-phospho-L-tyrosyl-[protein] + H2O = L-tyrosyl-[protein] + phosphate. In terms of biological role, mediates dephosphorylation of MAPK substrates such as SLT2, acquiring enhanced catalytic activity under oxidative conditions. This is Dual-specificity protein phosphatase SDP1 (SDP1) from Saccharomyces cerevisiae (strain ATCC 204508 / S288c) (Baker's yeast).